The sequence spans 225 residues: Histone H1.11L (225 aa).

Composition is skewed to low complexity over residues 1 to 23 (MSET…PAKA) and 31 to 43 (AAGG…PAGP). Disordered regions lie at residues 1 to 46 (MSET…PSVT) and 94 to 225 (SKGT…AKKK). N-acetylserine is present on serine 2. Residues 41–114 (AGPSVTELIT…GASGSFRLSK (74 aa)) enclose the H15 domain. Basic residues-rich tracts occupy residues 123 to 138 (APKK…KPAA), 146 to 163 (KKPK…KAKK), 171 to 189 (KSAK…KKAV), and 198 to 225 (KAVK…AKKK).

This sequence belongs to the histone H1/H5 family.

The protein localises to the nucleus. It localises to the chromosome. Histones H1 are necessary for the condensation of nucleosome chains into higher-order structures. The chain is Histone H1.11L from Gallus gallus (Chicken).